The primary structure comprises 308 residues: HTH-type transcriptional activator AllS (308 aa).

The 58-residue stretch at 2–59 folds into the HTH lysR-type domain; it reads FDPETLRTFIAVAETGSFSKAAERLCKTTATISYRIKLLEENTGVALFFRTTRSVTLT. Residues 19–38 constitute a DNA-binding region (H-T-H motif); sequence FSKAAERLCKTTATISYRIK.

Belongs to the LysR transcriptional regulatory family.

Functionally, positive regulator essential for the expression of allD operon. Binds to the allD promoter. The polypeptide is HTH-type transcriptional activator AllS (allS) (Escherichia coli O1:K1 / APEC).